The chain runs to 514 residues: Probable E3 ubiquitin-protein ligase ARI10 (514 aa).

A compositionally biased stretch (acidic residues) spans 1–18; that stretch reads MDYSDDDMIDNESGEENN. The segment at 1–26 is disordered; it reads MDYSDDDMIDNESGEENNSDGGGNES. The tract at residues 117-322 is TRIAD supradomain; sequence VDIQCGICFE…SDHYACNNYV (206 aa). The Zn(2+) site is built by Cys121, Cys124, Cys138, His140, Cys143, Cys146, Cys166, Cys171, Cys210, Cys215, Cys231, Cys233, Cys238, Cys241, His246, Cys251, Cys278, and Cys281. The segment at 121–171 adopts an RING-type 1 zinc-finger fold; that stretch reads CGICFESYTRKEIASVSCGHPYCKTCWTGYITTKIEDGPGCLRVKCPEPSC. An IBR-type zinc finger spans residues 190-251; the sequence is DKYYRYFLRS…SEDAHSPVDC (62 aa). The segment at 278–308 adopts an RING-type 2; atypical zinc-finger fold; the sequence is CPKCKRPIEKSHGCNHMTCSASCGHRFCWIC. Cys291 is a catalytic residue. The Zn(2+) site is built by Cys296, Cys300, Cys305, Cys308, His315, and Cys318.

It belongs to the RBR family. Ariadne subfamily. It depends on Zn(2+) as a cofactor.

The enzyme catalyses [E2 ubiquitin-conjugating enzyme]-S-ubiquitinyl-L-cysteine + [acceptor protein]-L-lysine = [E2 ubiquitin-conjugating enzyme]-L-cysteine + [acceptor protein]-N(6)-ubiquitinyl-L-lysine.. Its pathway is protein modification; protein ubiquitination. Its function is as follows. Might act as an E3 ubiquitin-protein ligase, or as part of E3 complex, which accepts ubiquitin from specific E2 ubiquitin-conjugating enzymes and then transfers it to substrates. The chain is Probable E3 ubiquitin-protein ligase ARI10 (ARI10) from Arabidopsis thaliana (Mouse-ear cress).